The chain runs to 405 residues: Tryptophan synthase beta chain (405 aa).

An N6-(pyridoxal phosphate)lysine modification is found at lysine 86.

Belongs to the TrpB family. In terms of assembly, tetramer of two alpha and two beta chains. It depends on pyridoxal 5'-phosphate as a cofactor.

It catalyses the reaction (1S,2R)-1-C-(indol-3-yl)glycerol 3-phosphate + L-serine = D-glyceraldehyde 3-phosphate + L-tryptophan + H2O. The protein operates within amino-acid biosynthesis; L-tryptophan biosynthesis; L-tryptophan from chorismate: step 5/5. Functionally, the beta subunit is responsible for the synthesis of L-tryptophan from indole and L-serine. This Shewanella piezotolerans (strain WP3 / JCM 13877) protein is Tryptophan synthase beta chain.